Consider the following 158-residue polypeptide: Putative peptidoglycan-binding-like protein (158 aa).

The N-terminal stretch at 1 to 24 is a signal peptide; that stretch reads MRSPKVKFLTIFTFCIFITKMSFA.

The protein belongs to the IagB/IpgF/P19 family.

Its subcellular location is the periplasm. In Escherichia coli (strain K12), this protein is Putative peptidoglycan-binding-like protein (pbl).